The sequence spans 475 residues: Ribulose bisphosphate carboxylase large chain (475 aa).

Residues Met-1–Ser-2 constitute a propeptide that is removed on maturation. Position 3 is an N-acetylproline (Pro-3). Lys-14 is modified (N6,N6,N6-trimethyllysine). Positions 123 and 173 each coordinate substrate. Lys-175 acts as the Proton acceptor in catalysis. Substrate is bound at residue Lys-177. Mg(2+) contacts are provided by Lys-201, Asp-203, and Glu-204. N6-carboxylysine is present on Lys-201. The active-site Proton acceptor is His-294. Substrate-binding residues include Arg-295, His-327, and Ser-379.

Belongs to the RuBisCO large chain family. Type I subfamily. Heterohexadecamer of 8 large chains and 8 small chains; disulfide-linked. The disulfide link is formed within the large subunit homodimers. The cofactor is Mg(2+). Post-translationally, the disulfide bond which can form in the large chain dimeric partners within the hexadecamer appears to be associated with oxidative stress and protein turnover.

Its subcellular location is the plastid. It is found in the chloroplast. It catalyses the reaction 2 (2R)-3-phosphoglycerate + 2 H(+) = D-ribulose 1,5-bisphosphate + CO2 + H2O. The enzyme catalyses D-ribulose 1,5-bisphosphate + O2 = 2-phosphoglycolate + (2R)-3-phosphoglycerate + 2 H(+). Functionally, ruBisCO catalyzes two reactions: the carboxylation of D-ribulose 1,5-bisphosphate, the primary event in carbon dioxide fixation, as well as the oxidative fragmentation of the pentose substrate in the photorespiration process. Both reactions occur simultaneously and in competition at the same active site. In Fagopyrum esculentum subsp. ancestrale (Wild buckwheat), this protein is Ribulose bisphosphate carboxylase large chain.